The following is a 547-amino-acid chain: MAGTKNKTRAQAKTEKKAAIQAKAGAEREATGVVRPVAKTRAKAKAKTGSKTDAVAEMKAVSKNKVVAETKEGALSEPKTLGKAMGDFTPKAGNESTSSTCKNEAGTDAWFWAGEEATINSWFWNGEEAGNSFSTKNDKPEIGAQVCAEELEPAAGADCKPRSGAEEEEEENVIGNWFWEGDDTSFDPNPKPVSRIVKPQPVYEINEKNRPKDWSEVTIWPNAPAVTPAVLGFRSQAPSEASPPSYIVLASAEENACSLPVATACRPSRNTRSCSQPIPECRFDSDPCIQTIDEIRRQIRIREVNGIKPFACPCKMECYMDSEEFEKLVSLLKSTTDPLIHKIARIAMGVHNVHPFAQEFINEVGVVTLIESLLSFPSPEMRKKTVITLNPPSGDERQRKIELHVKHMCKETMSFPLNSPGQQSGLKILGQLTTDFVHHYIVANYFSELFHLLSSGNCKTRNLVLKLLLNMSENPTAARDMINMKALAALKLIFNQKEAKANLVSGVAIFINIKEHIRKGSIVVVDHLSYNTLMAIFREVKEIIETM.

Residues 1-10 are compositionally biased toward basic residues; the sequence is MAGTKNKTRA. Disordered stretches follow at residues 1–32 and 80–102; these read MAGT…EATG and TLGK…STCK.

Belongs to the GPRASP family. In terms of assembly, homodimer. As to expression, highly expressed in brain. Not expressed in lung or liver. Down-regulated in brain from patients suffering from Alzheimer disease.

It is found in the cytoplasm. Its subcellular location is the nucleus. Its function is as follows. Survival and differentiation promoting protein that plays a role in the regulation of neurosynaptogenesis. Induces phosphatase PP2A activity which results in APP dephosphorylation and inhibits BACE1-mediated processing of APP. The sequence is that of G protein-coupled receptor associated sorting protein 3 from Homo sapiens (Human).